We begin with the raw amino-acid sequence, 321 residues long: Glyoxylate/hydroxypyruvate reductase B (321 aa).

Residues Arg-237 and Glu-266 contribute to the active site. The active-site Proton donor is the His-285.

This sequence belongs to the D-isomer specific 2-hydroxyacid dehydrogenase family. GhrB subfamily. In terms of assembly, homodimer.

The protein localises to the cytoplasm. It catalyses the reaction glycolate + NADP(+) = glyoxylate + NADPH + H(+). It carries out the reaction (R)-glycerate + NAD(+) = 3-hydroxypyruvate + NADH + H(+). The catalysed reaction is (R)-glycerate + NADP(+) = 3-hydroxypyruvate + NADPH + H(+). Its function is as follows. Catalyzes the NADPH-dependent reduction of glyoxylate and hydroxypyruvate into glycolate and glycerate, respectively. The protein is Glyoxylate/hydroxypyruvate reductase B of Erwinia tasmaniensis (strain DSM 17950 / CFBP 7177 / CIP 109463 / NCPPB 4357 / Et1/99).